Consider the following 112-residue polypeptide: 2Fe-2S ferredoxin (112 aa).

The 2Fe-2S ferredoxin-type domain maps to 5–107 (IKVTFIINDE…GIKVRLPSAT (103 aa)). Residues Cys-42, Cys-48, Cys-51, and Cys-88 each coordinate [2Fe-2S] cluster.

It belongs to the adrenodoxin/putidaredoxin family. [2Fe-2S] cluster serves as cofactor.

Its function is as follows. Ferredoxin are iron-sulfur proteins that transfer electrons in a wide variety of metabolic reactions. The sequence is that of 2Fe-2S ferredoxin (fdxB) from Rickettsia prowazekii (strain Madrid E).